We begin with the raw amino-acid sequence, 232 residues long: Phosphoribosylformylglycinamidine synthase subunit PurQ (232 aa).

Residues 2–232 enclose the Glutamine amidotransferase type-1 domain; it reads KIAIIQFGGT…SMADYITENF (231 aa). Cysteine 86 serves as the catalytic Nucleophile. Residues histidine 203 and glutamate 205 contribute to the active site.

As to quaternary structure, part of the FGAM synthase complex composed of 1 PurL, 1 PurQ and 2 PurS subunits.

The protein resides in the cytoplasm. It catalyses the reaction N(2)-formyl-N(1)-(5-phospho-beta-D-ribosyl)glycinamide + L-glutamine + ATP + H2O = 2-formamido-N(1)-(5-O-phospho-beta-D-ribosyl)acetamidine + L-glutamate + ADP + phosphate + H(+). It carries out the reaction L-glutamine + H2O = L-glutamate + NH4(+). It participates in purine metabolism; IMP biosynthesis via de novo pathway; 5-amino-1-(5-phospho-D-ribosyl)imidazole from N(2)-formyl-N(1)-(5-phospho-D-ribosyl)glycinamide: step 1/2. Its function is as follows. Part of the phosphoribosylformylglycinamidine synthase complex involved in the purines biosynthetic pathway. Catalyzes the ATP-dependent conversion of formylglycinamide ribonucleotide (FGAR) and glutamine to yield formylglycinamidine ribonucleotide (FGAM) and glutamate. The FGAM synthase complex is composed of three subunits. PurQ produces an ammonia molecule by converting glutamine to glutamate. PurL transfers the ammonia molecule to FGAR to form FGAM in an ATP-dependent manner. PurS interacts with PurQ and PurL and is thought to assist in the transfer of the ammonia molecule from PurQ to PurL. This Methanosarcina acetivorans (strain ATCC 35395 / DSM 2834 / JCM 12185 / C2A) protein is Phosphoribosylformylglycinamidine synthase subunit PurQ.